The following is a 307-amino-acid chain: Protein EI24 homolog (307 aa).

Helical transmembrane passes span 53–73 and 92–112; these read FIHCIFLNGIIFLGTYLIYLY and MFTIIYFSLWVYPVYIFSIIA. Asn135 carries an N-linked (GlcNAc...) asparagine glycan. The next 4 helical transmembrane spans lie at 153–173, 175–195, 225–245, and 260–280; these read LFGVILVMSAIIAFIPYTNFI, FVIITWLYSFWCFDYKWILRG, FFFPMLIGNAIFSILYPLFII, and GILPKQIPIFYVPEIIVNVIL.

Belongs to the EI24 family.

It is found in the membrane. The sequence is that of Protein EI24 homolog from Dictyostelium discoideum (Social amoeba).